Here is a 328-residue protein sequence, read N- to C-terminus: Lipoate--protein ligase 1 (328 aa).

The BPL/LPL catalytic domain maps to 27–214 (PAEESYFLFY…TIFGETEVEE (188 aa)). Residues arginine 69, 74–77 (GAVY), and lysine 131 each bind ATP. Lysine 131 serves as a coordination point for (R)-lipoate.

The catalysed reaction is L-lysyl-[lipoyl-carrier protein] + (R)-lipoate + ATP = N(6)-[(R)-lipoyl]-L-lysyl-[lipoyl-carrier protein] + AMP + diphosphate + H(+). Its pathway is protein modification; protein lipoylation via exogenous pathway; protein N(6)-(lipoyl)lysine from lipoate: step 1/2. It participates in protein modification; protein lipoylation via exogenous pathway; protein N(6)-(lipoyl)lysine from lipoate: step 2/2. Catalyzes the lipoylation of proteins, such as GcvH (SAV0833) and GcvH-L (SAV0324), likely via the ATP-dependent activation of lipoate to lipoyl-AMP and the transfer of the activated lipoyl onto the lipoyl domain of the target protein. The protein is Lipoate--protein ligase 1 of Staphylococcus aureus (strain Mu50 / ATCC 700699).